We begin with the raw amino-acid sequence, 869 residues long: Ribonucleoside-diphosphate reductase large chain 2 (869 aa).

The ATP-cone domain maps to 1–92; that stretch reads MYVIKRDGRK…ISNLHKQTTK (92 aa). ATP contacts are provided by residues 5–6, 11–17, threonine 53, and aspartate 57; these read KR and EPVQFDK. GDP-binding residues include serine 202 and serine 217. A disulfide bond links cysteine 218 and cysteine 443. DTTP contacts are provided by residues 226-228, lysine 243, arginine 256, and 263-264; these read DSI and AG. Serine 227 is modified (phosphoserine). Residue lysine 387 forms a Glycyl lysine isopeptide (Lys-Gly) (interchain with G-Cter in ubiquitin) linkage. Asparagine 426 is a binding site for GDP. Asparagine 426 (proton acceptor) is an active-site residue. The active-site Cysteine radical intermediate is cysteine 428. GDP contacts are provided by residues glutamate 430 and 608-611; that span reads TAST. Glutamate 430 serves as the catalytic Proton acceptor. Residues 793–843 form a disordered region; the sequence is SALTESSDNEKDASPVPSEQSSVSSAMSNVKLEDSVAPAVPTETIKEDSDE. Phosphoserine is present on residues serine 806, serine 827, and serine 868. The span at 806-820 shows a compositional bias: low complexity; the sequence is SPVPSEQSSVSSAMS.

This sequence belongs to the ribonucleoside diphosphate reductase large chain family. Heterotetramer of two large (R1) and two small (R2) subunits. S.cerevisiae has two different R1 subunits (RNR1 and RNR3) and two different R2 subunits (RNR2 and RNR4). The functional form of the small subunits is a RNR2-RNR4 heterodimer, where RNR2 provides the iron-radical center and RNR4 is required for proper folding of RNR2 and assembly with the large subunits. Under normal growth conditions, the active form of the large subunits is a homodimer of the constitutively expressed RNR1. In damaged cells or cells arrested for DNA synthesis, the reductase consists of multiple species because of the association of the small subunits (RNR2-RNR4) with either the RNR1 homodimer or a heterodimer of RNR1 and the damage-inducible RNR3.

The protein resides in the cytoplasm. It carries out the reaction a 2'-deoxyribonucleoside 5'-diphosphate + [thioredoxin]-disulfide + H2O = a ribonucleoside 5'-diphosphate + [thioredoxin]-dithiol. Its activity is regulated as follows. Under complex allosteric control mediated by deoxynucleoside triphosphates and ATP binding to separate specificity and activation sites on the large subunit. The type of nucleotide bound at the specificity site determines substrate preference. It seems probable that ATP makes the enzyme reduce CDP and UDP, dGTP favors ADP reduction and dTTP favors GDP reduction. Stimulated by ATP and inhibited by dATP binding to the activity site. Functionally, provides the precursors necessary for DNA synthesis. Catalyzes the biosynthesis of deoxyribonucleotides from the corresponding ribonucleotides. The chain is Ribonucleoside-diphosphate reductase large chain 2 (RNR3) from Saccharomyces cerevisiae (strain ATCC 204508 / S288c) (Baker's yeast).